The sequence spans 410 residues: MLGMLRWTTAGESHGQALIATVEHMPAGVPVTKDEVSYQLARRRLGYGRGARMKFEQDALTFLTGIRHGLTLGSPISIMIGNTEWDKWTTIMSSDALDMEDPDNVAAMSSGRGAKLTRPRPGHADYAGMLKYGFDDARNVLERSSARETAARVAAATVARSFLRETLGVEVLSHVISIGASEPYTGAEPTFADIQAIDDSPVRAFGKDAEESMIAEIEAAKKAGDTLGGIVEVIVEGLPIGLGSHISGEDRLDAQIAAALMGIQAIKGVEIGDGFEEARRRGSEAHDEVFLDDNGVYRNTNRAGGLEGGMTNGETLRVRAGMKPISTVPRALKTIDMENGKAATGIHQRSDVCAVPAAGVVAEAMVTLVLARAVLQKFGGDSLSETKSNIDTYLKNIEERMKFEGLEDGA.

NADP(+) is bound by residues arginine 43 and arginine 49. Residues 143–145 (RSS), 264–265 (QA), glycine 308, 323–327 (KPIST), and arginine 349 each bind FMN.

Belongs to the chorismate synthase family. As to quaternary structure, homotetramer. Requires FMNH2 as cofactor.

The catalysed reaction is 5-O-(1-carboxyvinyl)-3-phosphoshikimate = chorismate + phosphate. It functions in the pathway metabolic intermediate biosynthesis; chorismate biosynthesis; chorismate from D-erythrose 4-phosphate and phosphoenolpyruvate: step 7/7. Catalyzes the anti-1,4-elimination of the C-3 phosphate and the C-6 proR hydrogen from 5-enolpyruvylshikimate-3-phosphate (EPSP) to yield chorismate, which is the branch point compound that serves as the starting substrate for the three terminal pathways of aromatic amino acid biosynthesis. This reaction introduces a second double bond into the aromatic ring system. In Corynebacterium glutamicum (strain ATCC 13032 / DSM 20300 / JCM 1318 / BCRC 11384 / CCUG 27702 / LMG 3730 / NBRC 12168 / NCIMB 10025 / NRRL B-2784 / 534), this protein is Chorismate synthase.